The following is a 234-amino-acid chain: Demethylmenaquinone methyltransferase (234 aa).

S-adenosyl-L-methionine contacts are provided by residues T58, D79, and N104–A105.

This sequence belongs to the class I-like SAM-binding methyltransferase superfamily. MenG/UbiE family.

It catalyses the reaction a 2-demethylmenaquinol + S-adenosyl-L-methionine = a menaquinol + S-adenosyl-L-homocysteine + H(+). It functions in the pathway quinol/quinone metabolism; menaquinone biosynthesis; menaquinol from 1,4-dihydroxy-2-naphthoate: step 2/2. In terms of biological role, methyltransferase required for the conversion of demethylmenaquinol (DMKH2) to menaquinol (MKH2). The sequence is that of Demethylmenaquinone methyltransferase from Lysinibacillus sphaericus (strain C3-41).